Reading from the N-terminus, the 295-residue chain is Aspartate carbamoyltransferase catalytic subunit (295 aa).

Residues Arg54 and Thr55 each contribute to the carbamoyl phosphate site. Lys82 serves as a coordination point for L-aspartate. Residues Arg104, His132, and Gln135 each coordinate carbamoyl phosphate. Positions 165 and 218 each coordinate L-aspartate. Carbamoyl phosphate is bound by residues Gly257 and Pro258.

This sequence belongs to the aspartate/ornithine carbamoyltransferase superfamily. ATCase family. In terms of assembly, heterododecamer (2C3:3R2) of six catalytic PyrB chains organized as two trimers (C3), and six regulatory PyrI chains organized as three dimers (R2).

The catalysed reaction is carbamoyl phosphate + L-aspartate = N-carbamoyl-L-aspartate + phosphate + H(+). Its pathway is pyrimidine metabolism; UMP biosynthesis via de novo pathway; (S)-dihydroorotate from bicarbonate: step 2/3. In terms of biological role, catalyzes the condensation of carbamoyl phosphate and aspartate to form carbamoyl aspartate and inorganic phosphate, the committed step in the de novo pyrimidine nucleotide biosynthesis pathway. This Wolbachia pipientis wMel protein is Aspartate carbamoyltransferase catalytic subunit.